The sequence spans 452 residues: Phosphatidylinositol N-acetylglucosaminyltransferase GPI3 subunit (452 aa).

A helical membrane pass occupies residues 407–427; it reads LYLLCGIVEYMLFFLLEWLYP.

This sequence belongs to the glycosyltransferase group 1 family. As to quaternary structure, component of the phosphatidylinositol N-acetylglucosaminyltransferase complex composed of at least GPI1, GPI2, GPI3, GPI15, GPI19 and ERI1.

Its subcellular location is the endoplasmic reticulum membrane. The enzyme catalyses a 1,2-diacyl-sn-glycero-3-phospho-(1D-myo-inositol) + UDP-N-acetyl-alpha-D-glucosamine = a 6-(N-acetyl-alpha-D-glucosaminyl)-1-(1,2-diacyl-sn-glycero-3-phospho)-1D-myo-inositol + UDP + H(+). Its pathway is glycolipid biosynthesis; glycosylphosphatidylinositol-anchor biosynthesis. Inhibited by Ras, probably via the interaction between RAS2 and ERI1. Functionally, catalytic subunit in the complex catalyzing the transfer of N-acetylglucosamine from UDP-N-acetylglucosamine to phosphatidylinositol, the first step of GPI biosynthesis. This chain is Phosphatidylinositol N-acetylglucosaminyltransferase GPI3 subunit (SPT14), found in Saccharomyces cerevisiae (strain YJM789) (Baker's yeast).